The chain runs to 432 residues: Adenylosuccinate synthetase (432 aa).

GTP is bound by residues Gly12–Lys18 and Gly40–Thr42. The Proton acceptor role is filled by Asp13. Mg(2+) is bound by residues Asp13 and Gly40. Residues Asp13–Lys16, Asn38–His41, Thr132, Arg146, Gln226, Thr241, and Arg305 contribute to the IMP site. The Proton donor role is filled by His41. Val301 to Arg307 is a substrate binding site. GTP contacts are provided by residues Arg307, Lys333 to Asp335, and Ser415 to Ser417.

It belongs to the adenylosuccinate synthetase family. In terms of assembly, homodimer. Requires Mg(2+) as cofactor.

Its subcellular location is the cytoplasm. It carries out the reaction IMP + L-aspartate + GTP = N(6)-(1,2-dicarboxyethyl)-AMP + GDP + phosphate + 2 H(+). The protein operates within purine metabolism; AMP biosynthesis via de novo pathway; AMP from IMP: step 1/2. In terms of biological role, plays an important role in the de novo pathway of purine nucleotide biosynthesis. Catalyzes the first committed step in the biosynthesis of AMP from IMP. The polypeptide is Adenylosuccinate synthetase (Rhizobium leguminosarum bv. trifolii (strain WSM2304)).